The chain runs to 229 residues: 7-cyano-7-deazaguanine synthase (229 aa).

15–25 (LSGGLDSATVV) is a binding site for ATP. Zn(2+) is bound by residues Cys-194, Cys-204, Cys-207, and Cys-210.

This sequence belongs to the QueC family. Zn(2+) is required as a cofactor.

It carries out the reaction 7-carboxy-7-deazaguanine + NH4(+) + ATP = 7-cyano-7-deazaguanine + ADP + phosphate + H2O + H(+). Its pathway is purine metabolism; 7-cyano-7-deazaguanine biosynthesis. Catalyzes the ATP-dependent conversion of 7-carboxy-7-deazaguanine (CDG) to 7-cyano-7-deazaguanine (preQ(0)). In Pseudomonas syringae pv. syringae (strain B728a), this protein is 7-cyano-7-deazaguanine synthase.